A 273-amino-acid chain; its full sequence is uncharacterized protein (273 aa).

Residues 7–27 traverse the membrane as a helical segment; the sequence is LTLGICLVLLIILIVGYVIMT.

The protein belongs to the staphylococcal tandem lipoprotein family.

It is found in the cell membrane. This is an uncharacterized protein from Staphylococcus aureus (strain MSSA476).